A 71-amino-acid polypeptide reads, in one-letter code: General transcription factor IIH subunit 5 (71 aa).

Residue Thr69 is modified to Phosphothreonine.

It belongs to the TFB5 family. In terms of assembly, component of the 7-subunit TFIIH core complex composed of XPB/ERCC3, XPD/ERCC2, GTF2H1, GTF2H2, GTF2H3, GTF2H4 and GTF2H5, which is active in NER. The core complex associates with the 3-subunit CDK-activating kinase (CAK) module composed of CCNH/cyclin H, CDK7 and MNAT1 to form the 10-subunit holoenzyme (holo-TFIIH) active in transcription. Part of TBP-based Pol II pre-initiation complex (PIC), in which Pol II core assembles with general transcription factors and other specific initiation factors including GTF2E1, GTF2E2, GTF2F1, GTF2F2, TCEA1, ERCC2, ERCC3, GTF2H2, GTF2H3, GTF2H4, GTF2H5, GTF2A1, GTF2A2, GTF2B and TBP; this large multi-subunit PIC complex mediates DNA unwinding and targets Pol II core to the transcription start site where the first phosphodiester bond forms.

It localises to the nucleus. Its subcellular location is the cytoplasm. Component of the general transcription and DNA repair factor IIH (TFIIH) core complex, which is involved in general and transcription-coupled nucleotide excision repair (NER) of damaged DNA and, when complexed to CAK, in RNA transcription by RNA polymerase II. In NER, TFIIH acts by opening DNA around the lesion to allow the excision of the damaged oligonucleotide and its replacement by a new DNA fragment. In transcription, TFIIH has an essential role in transcription initiation. When the pre-initiation complex (PIC) has been established, TFIIH is required for promoter opening and promoter escape. Phosphorylation of the C-terminal tail (CTD) of the largest subunit of RNA polymerase II by the kinase module CAK controls the initiation of transcription. Necessary for the stability of the TFIIH complex and for the presence of normal levels of TFIIH in the cell. The sequence is that of General transcription factor IIH subunit 5 from Mus musculus (Mouse).